The following is a 584-amino-acid chain: ATP-dependent lipid A-core flippase (584 aa).

Helical transmembrane passes span 15-35, 63-83, 153-173, 251-271, and 277-297; these read LLGY…SMAV, IMWV…AGFI, LGML…CLVV, TGVT…FAGL, and GLTA…FAPV. An ABC transmembrane type-1 domain is found at 27–309; it reads LLSMLSMAVA…ISSVSQAMQR (283 aa). The ABC transporter domain occupies 341–576; it reads LSFDAVSFAY…GGLYARLHSL (236 aa). ATP is bound at residue 375–382; it reads GSSGSGKT.

The protein belongs to the ABC transporter superfamily. Lipid exporter (TC 3.A.1.106) family. In terms of assembly, homodimer.

The protein localises to the cell inner membrane. The catalysed reaction is ATP + H2O + lipid A-core oligosaccharideSide 1 = ADP + phosphate + lipid A-core oligosaccharideSide 2.. Its function is as follows. Involved in lipopolysaccharide (LPS) biosynthesis. Translocates lipid A-core from the inner to the outer leaflet of the inner membrane. Transmembrane domains (TMD) form a pore in the inner membrane and the ATP-binding domain (NBD) is responsible for energy generation. The chain is ATP-dependent lipid A-core flippase from Chromobacterium violaceum (strain ATCC 12472 / DSM 30191 / JCM 1249 / CCUG 213 / NBRC 12614 / NCIMB 9131 / NCTC 9757 / MK).